Here is a 504-residue protein sequence, read N- to C-terminus: Maturase K (504 aa).

The protein belongs to the intron maturase 2 family. MatK subfamily.

It is found in the plastid. Its subcellular location is the chloroplast. Functionally, usually encoded in the trnK tRNA gene intron. Probably assists in splicing its own and other chloroplast group II introns. The sequence is that of Maturase K from Quercus petraea (Durmast oak).